The sequence spans 434 residues: DNA primase large subunit PriL (434 aa).

[4Fe-4S] cluster is bound by residues cysteine 281, cysteine 392, cysteine 403, and cysteine 409.

It belongs to the eukaryotic-type primase large subunit family. As to quaternary structure, heterodimer of a small subunit (PriS) and a large subunit (PriL). It depends on [4Fe-4S] cluster as a cofactor.

Its function is as follows. Regulatory subunit of DNA primase, an RNA polymerase that catalyzes the synthesis of short RNA molecules used as primers for DNA polymerase during DNA replication. Stabilizes and modulates the activity of the small subunit, increasing the rate of DNA synthesis, and conferring RNA synthesis capability. The DNA polymerase activity may enable DNA primase to also catalyze primer extension after primer synthesis. May also play a role in DNA repair. This Methanothermobacter thermautotrophicus (strain ATCC 29096 / DSM 1053 / JCM 10044 / NBRC 100330 / Delta H) (Methanobacterium thermoautotrophicum) protein is DNA primase large subunit PriL.